Reading from the N-terminus, the 345-residue chain is Linoleate 10R-lipoxygenase COP4 (345 aa).

D87, D91, N222, S226, and E230 together coordinate Mg(2+). A DDXXD motif motif is present at residues 87 to 91 (DEISD).

It belongs to the terpene synthase family. Mg(2+) is required as a cofactor.

The catalysed reaction is (2E,6E)-farnesyl diphosphate + H2O = cubebol + diphosphate. It carries out the reaction (2E,6E)-farnesyl diphosphate = beta-copaene + diphosphate. The enzyme catalyses (2E,6E)-farnesyl diphosphate = beta-cubebene + diphosphate. It catalyses the reaction (2E,6E)-farnesyl diphosphate = (+)-sativene + diphosphate. Sesquiterpene synthase that catalyzes the cyclization of farnesyl diphosphate (FPP) into multiple products, including germacrene D, beta-copaene, beta-cubebene, (+)-sativene and cubebol, a natural sesquiterpene alcohol used in the food industry for its cooling and refreshing taste. Terpenoid hydrocarbons resulting from cyclization of farnesyl diphosphate are intermediates in the biosynthesis of biologically active compounds such as antibiotics, toxins and pheromones. This Coprinopsis cinerea (strain Okayama-7 / 130 / ATCC MYA-4618 / FGSC 9003) (Inky cap fungus) protein is Linoleate 10R-lipoxygenase COP4 (COP4).